The following is a 325-amino-acid chain: Elongation factor P--(R)-beta-lysine ligase (325 aa).

76–78 (SPE) contributes to the substrate binding site. Residues 100 to 102 (RNE) and Asn-109 each bind ATP. Tyr-118 is a substrate binding site. Residue 244–245 (EL) coordinates ATP. Glu-251 contributes to the substrate binding site. Gly-300 lines the ATP pocket.

It belongs to the class-II aminoacyl-tRNA synthetase family. EpmA subfamily. Homodimer.

The enzyme catalyses D-beta-lysine + L-lysyl-[protein] + ATP = N(6)-((3R)-3,6-diaminohexanoyl)-L-lysyl-[protein] + AMP + diphosphate + H(+). With EpmB is involved in the beta-lysylation step of the post-translational modification of translation elongation factor P (EF-P) on 'Lys-34'. Catalyzes the ATP-dependent activation of (R)-beta-lysine produced by EpmB, forming a lysyl-adenylate, from which the beta-lysyl moiety is then transferred to the epsilon-amino group of EF-P 'Lys-34'. This is Elongation factor P--(R)-beta-lysine ligase from Salmonella dublin (strain CT_02021853).